The chain runs to 557 residues: TBCC domain-containing protein 1 (557 aa).

Residues 290–435 (TTKRAKIACN…LEDHMARTGL (146 aa)) form the C-CAP/cofactor C-like domain.

It belongs to the TBCC family.

It localises to the cytoplasm. The protein localises to the cytoskeleton. It is found in the microtubule organizing center. The protein resides in the centrosome. Its subcellular location is the spindle pole. Its function is as follows. Plays a role in the regulation of centrosome and Golgi apparatus positioning, with consequences on cell shape and cell migration. This Homo sapiens (Human) protein is TBCC domain-containing protein 1 (TBCCD1).